Consider the following 159-residue polypeptide: Ribosomal RNA large subunit methyltransferase H (159 aa).

S-adenosyl-L-methionine-binding positions include L76, G108, and 127 to 132 (FGRLTL).

Belongs to the RNA methyltransferase RlmH family. Homodimer.

It localises to the cytoplasm. It carries out the reaction pseudouridine(1915) in 23S rRNA + S-adenosyl-L-methionine = N(3)-methylpseudouridine(1915) in 23S rRNA + S-adenosyl-L-homocysteine + H(+). Specifically methylates the pseudouridine at position 1915 (m3Psi1915) in 23S rRNA. The sequence is that of Ribosomal RNA large subunit methyltransferase H from Listeria monocytogenes serovar 1/2a (strain ATCC BAA-679 / EGD-e).